We begin with the raw amino-acid sequence, 374 residues long: UDP-N-acetylglucosamine--N-acetylmuramyl-(pentapeptide) pyrophosphoryl-undecaprenol N-acetylglucosamine transferase (374 aa).

Residues 35–37 (TGG), Asn-144, Arg-185, Ser-211, and Gln-305 each bind UDP-N-acetyl-alpha-D-glucosamine.

Belongs to the glycosyltransferase 28 family. MurG subfamily.

It localises to the cell inner membrane. It carries out the reaction di-trans,octa-cis-undecaprenyl diphospho-N-acetyl-alpha-D-muramoyl-L-alanyl-D-glutamyl-meso-2,6-diaminopimeloyl-D-alanyl-D-alanine + UDP-N-acetyl-alpha-D-glucosamine = di-trans,octa-cis-undecaprenyl diphospho-[N-acetyl-alpha-D-glucosaminyl-(1-&gt;4)]-N-acetyl-alpha-D-muramoyl-L-alanyl-D-glutamyl-meso-2,6-diaminopimeloyl-D-alanyl-D-alanine + UDP + H(+). The protein operates within cell wall biogenesis; peptidoglycan biosynthesis. In terms of biological role, cell wall formation. Catalyzes the transfer of a GlcNAc subunit on undecaprenyl-pyrophosphoryl-MurNAc-pentapeptide (lipid intermediate I) to form undecaprenyl-pyrophosphoryl-MurNAc-(pentapeptide)GlcNAc (lipid intermediate II). This is UDP-N-acetylglucosamine--N-acetylmuramyl-(pentapeptide) pyrophosphoryl-undecaprenol N-acetylglucosamine transferase from Trichodesmium erythraeum (strain IMS101).